The following is a 450-amino-acid chain: MGKYFGTDGVRGEANLELTPELAFKLGRFGGYVLSQHETEAPKVFVGRDTRISGEMLESALVAGLLSVGIHVYKLGVLATPAVAYLVETEGASAGVMISASHNPALDNGIKFFGGDGFKLDDEKEAEIEALLDAEEDTLPRPSAEGLGILVDYPEGLRKYEGYLVSTGTPLDGMKVALDTANGAASTSARQIFADLGAQLTVIGETPDGLNINLNVGSTHPEALQEVVKESGSAIGLAFDGDSDRLIAVDENGDIVDGDKIMYIIGKYLSEKGQLAQNTIVTTVMSNLGFHKALNREGINKAVTAVGDRYVVEEMRKSGYNLGGEQSGHVILMDYNTTGDGQLSAVQLTKIMKETGKSLSELAAEVTIYPQKLVNIRVENVMKEKAMEVPAIKVIIEKMEEEMAGNGRILVRPSGTEPLLRVMAEAPTTEEVDYYVDTITDVVRAEIGID.

Catalysis depends on S101, which acts as the Phosphoserine intermediate. S101, D240, D242, and D244 together coordinate Mg(2+). A Phosphoserine modification is found at S101.

This sequence belongs to the phosphohexose mutase family. Mg(2+) serves as cofactor. Activated by phosphorylation.

The catalysed reaction is alpha-D-glucosamine 1-phosphate = D-glucosamine 6-phosphate. Its function is as follows. Catalyzes the conversion of glucosamine-6-phosphate to glucosamine-1-phosphate. This chain is Phosphoglucosamine mutase, found in Streptococcus pneumoniae (strain Hungary19A-6).